Consider the following 56-residue polypeptide: Protein hunchback (56 aa).

3 C2H2-type zinc fingers span residues 1-5, 11-33, and 39-56; these read HLRNH, FKCDKCSYSCVNKSMLNSHLKSH, and FRCSDCAYATKYCHSLKL.

The protein belongs to the hunchback C2H2-type zinc-finger protein family.

Its subcellular location is the nucleus. In terms of biological role, gap class segmentation protein that controls development of head structures. The sequence is that of Protein hunchback (hb) from Euscelis plebejus (Leafhopper).